Here is a 1213-residue protein sequence, read N- to C-terminus: Oligopeptidase PhomG' (1213 aa).

Residue histidine 447 participates in Zn(2+) binding. Glutamate 448 is an active-site residue. 2 residues coordinate Zn(2+): histidine 451 and histidine 454.

The protein belongs to the peptidase M3 family. Monomer. It depends on Zn(2+) as a cofactor.

It participates in mycotoxin biosynthesis. Its function is as follows. Oligopeptidase; part of the gene cluster that mediates the biosynthesis of the phomopsins, a group of hexapeptide mycotoxins which infects lupins and causes lupinosis disease in livestock. Within the pathway, phomG and phomG' are probably involved in the processing of the phomA and phomA' precursors. The pathway starts with the processing of the precursor phomA by several endopeptidases including kexin proteases as well as the cluster-specific S41 family peptidase phomP1 and the oligopeptidase phomG to produce 10 identical copies of the hexapeptide Tyr-Val-Ile-Pro-Ile-Asp. After being excised from the precursor peptide, the core peptides are cyclized and modified post-translationally by enzymes encoded within the gene cluster. The timing and order of proteolysis of the phomA precursor and PTMs are still unknown. Two tyrosinase-like enzymes, phomQ1 and phomQ2, catalyze the chlorination and hydroxylation of Tyr, respectively. PhomYb, is proposed to be involved in the construction of the macrocyclic structure. The other 4 ustYa family proteins may be involved in PTMs that generate the unique structure of phomopsin A. PhomYa is required for the hydroxylation of C-beta of Tyr. PhomYc, phomYd, and phomYe are responsible for the biosynthesis of 2,3-dehydroisoleucine (dIle), 2,3-dehydroaspartic acid (dAsp), and 3,4-dehydroproline (dPro), respectively. While dIle formation by phomYc is indispensable for the installation of dAsp by phomYd, the order of the other PTMs have not been elucidated yet. Most of the biosynthetic enzymes likely have broad substrate specificity, and thus, there might be a metabolic grid from a precursor to phomopsin A. The enzyme(s) responsible for the biosynthesis of 3,4-dehydrovaline (dVal) have also not been identified yet. Finally, phomM acts as an S-adenosylmethionine-dependent alpha-N-methyltransferase that catalyzes two successive N-methylation reactions, converting N-desmethyl-phomopsin A to phomopsin A and phomopsin A further to an N,N-dimethylated congener called phomopsin E. The protein is Oligopeptidase PhomG' of Diaporthe leptostromiformis (Lupinosis disease fungus).